The sequence spans 117 residues: Cysteine rich necrotrophic effector Tox1 (117 aa).

A signal peptide spans 1 to 17 (MKLTMVLSVAFATLTFA). 8 disulfide bridges follow: Cys-36–Cys-87, Cys-44–Cys-55, Cys-53–Cys-58, Cys-54–Cys-98, Cys-63–Cys-83, Cys-67–Cys-117, Cys-86–Cys-97, and Cys-107–Cys-110. A chitin-binding domain region spans residues 87–117 (CNAGGESHELCCSIASAGIDCNPCTAGLRMC).

As to quaternary structure, interacts with host cell wall-associated kinase receptor Snn1.

Its subcellular location is the secreted. Its function is as follows. Necrotrophic effector that plays a critical role during fungal penetration, via its interaction with the host Snn1 protein. Snn1 is a member of the wall-associated kinase class of receptors, which are known to drive pathways for biotrophic pathogen resistance. Recognition of Tox1 by Snn1 induces mitogen-activated protein kinase genes such as MAPK3 and activates programmed cell death, which allows this necrotroph to gain nutrients and sporulate. Recognition of Tox1 by Snn1 also induces other plant defense responses, including oxidative burst and pathogenesis related (PR) gene expression. The development of necrosis and disease induced by Tox1, and particularly penetration during infection, requires light, which is probably related to the light-dependent expression of host Snn1. Tox1 plays an additional role in providing significant protection from wheat chitinases by binding chitin in the fungal cell wall. This chain is Cysteine rich necrotrophic effector Tox1, found in Phaeosphaeria nodorum (strain SN15 / ATCC MYA-4574 / FGSC 10173) (Glume blotch fungus).